A 250-amino-acid chain; its full sequence is Ureidoacrylate amidohydrolase RutB (250 aa).

Aspartate 44 functions as the Proton acceptor in the catalytic mechanism. Lysine 153 is a catalytic residue. Cysteine 186 functions as the Nucleophile in the catalytic mechanism.

This sequence belongs to the isochorismatase family. RutB subfamily.

The catalysed reaction is (Z)-3-ureidoacrylate + H2O + H(+) = (Z)-3-aminoacrylate + NH4(+) + CO2. The enzyme catalyses (Z)-3-ureidoacrylate + H2O = (Z)-3-aminoacrylate + carbamate + H(+). It carries out the reaction (Z)-2-methylureidoacrylate + H2O + H(+) = (Z)-2-methylaminoacrylate + NH4(+) + CO2. Functionally, hydrolyzes ureidoacrylate to form aminoacrylate and carbamate. The carbamate hydrolyzes spontaneously, thereby releasing one of the nitrogen atoms of the pyrimidine ring as ammonia and one of its carbon atoms as CO2. The sequence is that of Ureidoacrylate amidohydrolase RutB from Pantoea ananatis (strain LMG 20103).